Consider the following 541-residue polypeptide: Propionyl-CoA carboxylase beta chain, mitochondrial (541 aa).

A mitochondrion-targeting transit peptide spans 1-28; that stretch reads MAAVIRIRAMAAGTRLRVLNCGLGTTIR. A CoA carboxyltransferase N-terminal domain is found at 34-292; the sequence is PVSVNERIEN…SNQDPASIRE (259 aa). The segment at 34-535 is carboxyltransferase; the sequence is PVSVNERIEN…SKKVHRPWRK (502 aa). Residue Ser-73 is modified to Phosphoserine. Lys-101 bears the N6-acetyllysine; alternate mark. Lys-101 bears the N6-succinyllysine; alternate mark. Lys-250 is subject to N6-succinyllysine. Residues 296–535 enclose the CoA carboxyltransferase C-terminal domain; the sequence is PSDRLVPELD…SKKVHRPWRK (240 aa). Residues 327–360 form an acyl-CoA binding region; it reads DEREFFEIMPNYAKNIVIGFARMNGRTVGIVGNQ. N6-acetyllysine; alternate is present on residues Lys-476 and Lys-491. N6-succinyllysine; alternate is present on residues Lys-476 and Lys-491.

Belongs to the AccD/PCCB family. The holoenzyme is a dodecamer composed of 6 PCCA/alpha subunits and 6 PCCB/beta subunits.

The protein resides in the mitochondrion matrix. It carries out the reaction propanoyl-CoA + hydrogencarbonate + ATP = (S)-methylmalonyl-CoA + ADP + phosphate + H(+). It catalyses the reaction butanoyl-CoA + hydrogencarbonate + ATP = (2S)-ethylmalonyl-CoA + ADP + phosphate + H(+). Its pathway is metabolic intermediate metabolism; propanoyl-CoA degradation; succinyl-CoA from propanoyl-CoA: step 1/3. Its function is as follows. This is one of the 2 subunits of the biotin-dependent propionyl-CoA carboxylase (PCC), a mitochondrial enzyme involved in the catabolism of odd chain fatty acids, branched-chain amino acids isoleucine, threonine, methionine, and valine and other metabolites. Propionyl-CoA carboxylase catalyzes the carboxylation of propionyl-CoA/propanoyl-CoA to D-methylmalonyl-CoA/(S)-methylmalonyl-CoA. Within the holoenzyme, the alpha subunit catalyzes the ATP-dependent carboxylation of the biotin carried by the biotin carboxyl carrier (BCC) domain, while the beta subunit then transfers the carboxyl group from carboxylated biotin to propionyl-CoA. Propionyl-CoA carboxylase also significantly acts on butyryl-CoA/butanoyl-CoA, which is converted to ethylmalonyl-CoA/(2S)-ethylmalonyl-CoA. Other alternative minor substrates include (2E)-butenoyl-CoA/crotonoyl-CoA. The protein is Propionyl-CoA carboxylase beta chain, mitochondrial of Rattus norvegicus (Rat).